The following is a 913-amino-acid chain: Sterol uptake control protein 2 (913 aa).

Residues 50-80 (GCDNCKRRRVKCDEGKPACRKCTNMKLECQY) constitute a DNA-binding region (zn(2)-C6 fungal-type). Disordered regions lie at residues 103–173 (GSVE…SMGL) and 216–258 (GNMG…LAGS). The residue at position 122 (threonine 122) is a Phosphothreonine. The segment covering 150-164 (SESEEKSSAPIEDKN) has biased composition (basic and acidic residues). Over residues 222 to 241 (QLQQQQQVQQQSQPQTQAQQ) the composition is skewed to low complexity. A coiled-coil region spans residues 303–346 (QQHQQVQLQQYQQLRQEQHQQVQQQQQEQLQQYQQHFLQQQQQV). Disordered regions lie at residues 347–385 (LLQQ…TLNS) and 453–489 (MQEH…GSAS). A compositionally biased stretch (polar residues) spans 374-385 (LQSQTSETTLNS). A coiled-coil region spans residues 440-472 (ATKASNAEEALANMQEHHERAAASVKENDGQLS). The segment covering 454–468 (QEHHERAAASVKEND) has biased composition (basic and acidic residues). Polar residues predominate over residues 469–487 (GQLSDTKSPAPSNNAQGGS). Serine 519 bears the Phosphoserine mark. Over residues 552 to 562 (EPTISLQTSQT) the composition is skewed to polar residues. The tract at residues 552–571 (EPTISLQTSQTENEDDASRQ) is disordered.

It is found in the nucleus. Its function is as follows. Transcription factor that is involved in activation of anaerobic genes such as DAN/TIR cell wall mannoprotein genes and YML083c. Appears to bind to anaerobic response elements (AR1) with the consensus sequence 5'-TCGTTYAG-3' present in the promoter regions of DAN/TIR genes. Involved in sterol uptake and regulation of the sterol biosynthesis. Binds to sterol regulatory elements (SRE) with the consensus sequence 5'-TCGTATA-3' present in ERG2 and ERG3 promoters. May be involved in down-regulation of CWP2 during anaerobic adaptation. This is Sterol uptake control protein 2 (UPC2) from Saccharomyces cerevisiae (strain ATCC 204508 / S288c) (Baker's yeast).